An 850-amino-acid chain; its full sequence is MDQDIKTIIQYPVGATEFDIPFDYLSRKFVRVSLVSDDNRRLLSNITEYRYVSKTRVKLLVATGGFDRVEIRRFTSASERIVDFSDGSVLRAADLNVSQLQSAHIAEEARDVSLMSMLQDDAGNLDAKGRRIVNLSDPVADSDAATKGYVDEGLEHTLRFSESTVQPLPPLSLMDGKILAFSGGKPIGILPESGSAADVLVELSKVSGYNLIGKATSFANMRSASGLKVGDVVLLTSYYEGGTTGGGEFLVKAGSAVDDGGHICVPSGSTNIYLERITSEVHLLDYGILTELNGTGARIDMSGKLQSAINRAKSAVMPLVTGIPSENHYIRRGVYIEKGVDITGIKTITGCLSLLVDTRKLVGLVAPGYPDTKWALVNLNAQFNASGIVFGSTIGNQSFDSIVVRDVSDRGAPGAGQLHVTSGTMVKGALCATGFDGPGVSILGSYDSVIPDIRSVHCGNVAQWGVDIAAYRGSRPDNTNCMTIGRIECHDATDRALRCAADLSHVGEIHIEATLVTSTEQSTSATIADNGWGYANVLLQGLGTSYGSVRDLPVTGSVPPVVEVVADDTVVDSLSLPRSNLSLHYAFTTPRGCLSAGTINVGGDIIVTNGANTNIDSITMGGDSAKLTSASINLNVGILRAVGAASSVVSVGGNIGRLECASATLTGVDVLRGSITSLTLLDRNTISRTTAQSLNVVGTRNYLKSGFRVSGPATLGGVNNSASDTVFAGAVALKDPWKFIAVYINGNVTYSGNTTSSTYDVSFQDVFIEGELLLSGPCRIHADNMRAINMRIGQMQTGFIVMKNCTLSGGVEGNYIGSFNVPPIGSITQNFETGIPSVFTTSGWKPLTLA.

The protein in the N-terminal section; belongs to the Teseptimavirus fiber family. As to quaternary structure, homotrimer.

The protein localises to the virion. Its function is as follows. Functions as a receptor binding protein (RBP) and probably mediates the attachment to the host capsular exopolysaccharides. Displays a depolymerase activity that specifically degrades the KN4-type polysaccharides of Klebsiella pneumoniae capsule, which allows the phage to reach the host cell membrane and bind the entry receptor. The sequence is that of Depolymerase, capsule KN4-specific from Klebsiella pneumoniae (Bacteriophage KN4-1).